Reading from the N-terminus, the 308-residue chain is Ornithine carbamoyltransferase (308 aa).

Residues Arg-103 and 130–133 each bind carbamoyl phosphate; that span reads HPAQ. L-ornithine is bound by residues Asn-162, Asp-221, and 225 to 226; that span reads SM. Carbamoyl phosphate is bound by residues 261–262 and Arg-289; that span reads CL.

This sequence belongs to the aspartate/ornithine carbamoyltransferase superfamily. OTCase family.

The protein localises to the cytoplasm. It catalyses the reaction carbamoyl phosphate + L-ornithine = L-citrulline + phosphate + H(+). It participates in amino-acid biosynthesis; L-arginine biosynthesis; L-arginine from L-ornithine and carbamoyl phosphate: step 1/3. Reversibly catalyzes the transfer of the carbamoyl group from carbamoyl phosphate (CP) to the N(epsilon) atom of ornithine (ORN) to produce L-citrulline. The chain is Ornithine carbamoyltransferase from Deinococcus radiodurans (strain ATCC 13939 / DSM 20539 / JCM 16871 / CCUG 27074 / LMG 4051 / NBRC 15346 / NCIMB 9279 / VKM B-1422 / R1).